Reading from the N-terminus, the 450-residue chain is Hydrolase ffsE (450 aa).

Catalysis depends on Ser-266, which acts as the Nucleophile.

Belongs to the AB hydrolase superfamily. FUS2 hydrolase family. Homodimer.

The protein operates within mycotoxin biosynthesis. Its function is as follows. Hydrolase; part of the gene cluster that mediates the biosynthesis of the cytotoxic leucine-containing cytochalasans, including aspochalasin C, aspochalasin E, TMC-169, flavichalasine F, aspergillin PZ, aspochalasin M and flavichalasine G. The first step in the pathway is catalyzed by the hybrid PKS-NRPS ffsA that utilizes 8 units of malonyl-CoA to iteratively assemble the octaketide chain before addition of L-leucine by the C-terminal NRPS modules. Because ffsA lacks a designated enoylreductase (ER) domain, the required activity is provided the enoyl reductase fssC. The methyltransferase (MT) domain of ffsA catalyzes the alpha-methylation at C10 and C14 using S-adenosyl-L-methionine as the methyl-donating cosubstrate. Reduction by the hydrolyase ffsE, followed by dehydration and intra-molecular Diels-Alder cyclization by the Diels-Alderase ffsF then yield the required isoindolone-fused macrocycle. A number of oxidative steps catalyzed by the tailoring cytochrome P450 monooxygenase ffsD, the FAD-linked oxidoreductase ffsJ and the short-chain dehydrogenase/reductase ffsI, are further required to afford the final products. This Aspergillus flavipes protein is Hydrolase ffsE.